The following is a 198-amino-acid chain: Type II secretion system protein J (198 aa).

A propeptide spans 1 to 7 (MIRRSSG) (leader sequence). Phenylalanine 8 is subject to N-methylphenylalanine. Residues 8–28 (FTLVEMLLALAILAALSVAAV) form a helical membrane-spanning segment.

This sequence belongs to the GSP J family. Type II secretion is composed of four main components: the outer membrane complex, the inner membrane complex, the cytoplasmic secretion ATPase and the periplasm-spanning pseudopilus. Interacts with core component PulG. Post-translationally, cleaved by prepilin peptidase. In terms of processing, methylated by prepilin peptidase at the amino group of the N-terminal phenylalanine once the leader sequence is cleaved by prepilin peptidase.

It localises to the cell inner membrane. Component of the type II secretion system required for the energy-dependent secretion of extracellular factors such as proteases and toxins from the periplasm. Part of the pseudopilus tip complex that is critical for the recognition and binding of secretion substrates. This Klebsiella pneumoniae protein is Type II secretion system protein J (pulJ).